We begin with the raw amino-acid sequence, 433 residues long: Protein arginine N-methyltransferase 2 (433 aa).

The tract at residues 1–20 is disordered; that stretch reads MATSGDCPRSESQGEEPAEC. Interaction with ESR1 stretches follow at residues 1–277 and 133–275; these read MATS…SALK and KESL…NLSA. The region spanning 30 to 89 is the SH3 domain; that stretch reads VQPEEFVAIADYAATDETQLSFLRGEKILILRQTTADWWWGERAGCCGYIPANHVGKHVD. R61 and R72 each carry asymmetric dimethylarginine. An interaction with RB1 region spans residues 83 to 207; sequence HVGKHVDEYD…DVVLPEKVDV (125 aa). One can recognise an SAM-dependent MTase PRMT-type domain in the interval 99 to 432; the sequence is DEEYFGSYGT…KVGEKVFPIW (334 aa). H112, R121, G145, E168, and E197 together coordinate S-adenosyl-L-methionine. Active-site residues include E211 and E220.

Belongs to the class I-like SAM-binding methyltransferase superfamily. Protein arginine N-methyltransferase family. Self-associates. Interacts with RB1 and E2F1. Interacts with NCOA6 coactivator. Interacts (via SH3 domain) with PRMT8. Interacts with AR. Interacts with NFKBIA. Interacts with ESR1, ESR2, PGR, PPARG, RARA, RXRA and THRB. Interacts with HNRNPUL1. Widely expressed. Highly expressed in androgen target organs such as heart, prostate, skeletal muscle, ovary and spinal cord.

It is found in the cytoplasm. The protein resides in the nucleus. It localises to the nucleolus. It catalyses the reaction L-arginyl-[protein] + 2 S-adenosyl-L-methionine = N(omega),N(omega)-dimethyl-L-arginyl-[protein] + 2 S-adenosyl-L-homocysteine + 2 H(+). Its function is as follows. Arginine methyltransferase that methylates the guanidino nitrogens of arginyl residues in proteins such as STAT3, FBL, histone H4. Acts as a coactivator (with NCOA2) of the androgen receptor (AR)-mediated transactivation. Acts as a coactivator (with estrogen) of estrogen receptor (ER)-mediated transactivation. Enhances PGR, PPARG, RARA-mediated transactivation. May inhibit NF-kappa-B transcription and promote apoptosis. Represses E2F1 transcriptional activity (in a RB1-dependent manner). May be involved in growth regulation. This Homo sapiens (Human) protein is Protein arginine N-methyltransferase 2 (PRMT2).